A 379-amino-acid chain; its full sequence is 23S rRNA (uracil(747)-C(5))-methyltransferase RlmC (379 aa).

Residues Cys3, Cys11, Cys14, and Cys87 each coordinate [4Fe-4S] cluster. 4 residues coordinate S-adenosyl-L-methionine: Gln212, Phe241, Glu262, and Asn309. Cys336 serves as the catalytic Nucleophile.

It belongs to the class I-like SAM-binding methyltransferase superfamily. RNA M5U methyltransferase family. RlmC subfamily.

The enzyme catalyses uridine(747) in 23S rRNA + S-adenosyl-L-methionine = 5-methyluridine(747) in 23S rRNA + S-adenosyl-L-homocysteine + H(+). Functionally, catalyzes the formation of 5-methyl-uridine at position 747 (m5U747) in 23S rRNA. The sequence is that of 23S rRNA (uracil(747)-C(5))-methyltransferase RlmC from Shewanella loihica (strain ATCC BAA-1088 / PV-4).